The sequence spans 148 residues: Large ribosomal subunit protein bL9 (148 aa).

It belongs to the bacterial ribosomal protein bL9 family.

Binds to the 23S rRNA. This Marinobacter nauticus (strain ATCC 700491 / DSM 11845 / VT8) (Marinobacter aquaeolei) protein is Large ribosomal subunit protein bL9.